Consider the following 417-residue polypeptide: MAEIKVPELAESISEGTIAQWLKQPGDYVEQGEYLLELETDKVNVELTAEESGVLQEVLKDSGDTVQVGEIIGTISEGAGESSAPAPTEKTESKESVKEEKQAEPAAQEVSEEAQSEAKSRTIASPSARKLAREKGIDLSQVPTGDPLGRVRKQDVEAYEKPASKPAPQQKQQPQAQKAQQSFDKPVEVQKMSRRRQTIAKRLVEVQQTSAMLTTFNEVDMTAVMNLRKRRKDQFFEQNEVKLGFMSFFTKAVVAALKKYPLLNAEIQGDELIVKKFYDIGIAVAADEGLVVPVVRDADRLTFAGIEKEIGELAKKARNNKLTLSELQGGSFTITNGGTFGSLMSTPILNSPQVGILGMHKIQLRPVAIDEERFENRPMMYIALSYDHRIVDGKEAVGFLVTIKNLLEDPEQLLLEG.

Residues 1–76 (MAEIKVPELA…QVGEIIGTIS (76 aa)) enclose the Lipoyl-binding domain. Position 42 is an N6-lipoyllysine (Lys-42). The interval 75 to 191 (ISEGAGESSA…SFDKPVEVQK (117 aa)) is disordered. 2 stretches are compositionally biased toward basic and acidic residues: residues 89–103 (EKTESKESVKEEKQA) and 152–163 (RKQDVEAYEKPA). One can recognise a Peripheral subunit-binding (PSBD) domain in the interval 123 to 160 (IASPSARKLAREKGIDLSQVPTGDPLGRVRKQDVEAYE). Over residues 164–182 (SKPAPQQKQQPQAQKAQQS) the composition is skewed to low complexity. Residues His-388 and Asp-392 contribute to the active site.

This sequence belongs to the 2-oxoacid dehydrogenase family. In terms of assembly, forms a 24-polypeptide structural core with octahedral symmetry. Part of the 2-oxoglutarate dehydrogenase (OGDH) complex composed of E1 (2-oxoglutarate dehydrogenase), E2 (dihydrolipoamide succinyltransferase) and E3 (dihydrolipoamide dehydrogenase); the complex contains multiple copies of the three enzymatic components (E1, E2 and E3). The cofactor is (R)-lipoate.

It carries out the reaction N(6)-[(R)-dihydrolipoyl]-L-lysyl-[protein] + succinyl-CoA = N(6)-[(R)-S(8)-succinyldihydrolipoyl]-L-lysyl-[protein] + CoA. It functions in the pathway amino-acid degradation; L-lysine degradation via saccharopine pathway; glutaryl-CoA from L-lysine: step 6/6. In terms of biological role, E2 component of the 2-oxoglutarate dehydrogenase (OGDH) complex which catalyzes the second step in the conversion of 2-oxoglutarate to succinyl-CoA and CO(2). This chain is Dihydrolipoyllysine-residue succinyltransferase component of 2-oxoglutarate dehydrogenase complex (odhB), found in Bacillus subtilis (strain 168).